The sequence spans 196 residues: Rho-related GTP-binding protein RhoB (196 aa).

12–19 is a binding site for GTP; it reads GDGACGKT. The O-linked (GlcNAc) tyrosine; by Photorhabdus PAU_02230 glycan is linked to tyrosine 34. The short motif at 34-42 is the Effector region element; sequence YVPTVFENY. Residue threonine 37 is glycosylated ((Microbial infection) O-linked (Glc) threonine; by C.difficile toxins TcdA and TcdB). Residue asparagine 41 is modified to ADP-ribosylasparagine; by botulinum toxin. GTP contacts are provided by residues 59-63 and 117-120; these read DTAGQ and NKKD. Tyrosine 154 carries the post-translational modification Phosphotyrosine. 2 S-palmitoyl cysteine lipidation sites follow: cysteine 189 and cysteine 192. Cysteine 193 is modified (cysteine methyl ester). Cysteine 193 is lipidated: S-farnesyl cysteine; in plasma membrane form. The S-geranylgeranyl cysteine; in endosomal form moiety is linked to residue cysteine 193. Residues 194-196 constitute a propeptide, removed in mature form; sequence KVL.

It belongs to the small GTPase superfamily. Rho family. Binds ROCK1 and ROCK2. Also binds PKN1/PRK1. Interacts with ARGGEF3. Interacts with RTKN. Interacts with AKAP13. Interacts with RIPOR1. In terms of processing, prenylation specifies the subcellular location of RHOB. The farnesylated form is localized to the plasma membrane while the geranylgeranylated form is localized to the endosome. Post-translationally, (Microbial infection) Glycosylated at Tyr-34 by Photorhabdus asymbiotica toxin PAU_02230. Mono-O-GlcNAcylation by PAU_02230 inhibits downstream signaling by an impaired interaction with diverse regulator and effector proteins of Rho and leads to actin disassembly. (Microbial infection) Glucosylated at Thr-37 by C.difficile toxins TcdA and TcdB in the colonic epithelium. Monoglucosylation completely prevents the recognition of the downstream effector, blocking the GTPases in their inactive form, leading to actin cytoskeleton disruption.

Its subcellular location is the late endosome membrane. It is found in the cell membrane. It localises to the nucleus. The protein localises to the cleavage furrow. Its function is as follows. Mediates apoptosis in neoplastically transformed cells after DNA damage. Not essential for development but affects cell adhesion and growth factor signaling in transformed cells. Plays a negative role in tumorigenesis as deletion causes tumor formation. Involved in intracellular protein trafficking of a number of proteins. Targets PKN1 to endosomes and is involved in trafficking of the EGF receptor from late endosomes to lysosomes. Also required for stability and nuclear trafficking of AKT1/AKT which promotes endothelial cell survival during vascular development. Serves as a microtubule-dependent signal that is required for the myosin contractile ring formation during cell cycle cytokinesis. Required for genotoxic stress-induced cell death in breast cancer cells. The chain is Rho-related GTP-binding protein RhoB (RHOB) from Homo sapiens (Human).